Consider the following 441-residue polypeptide: Cortexillin-2 (441 aa).

The tract at residues 1-229 (MDLNKEWEKV…VLYTSLFFHA (229 aa)) is actin-binding. Calponin-homology (CH) domains lie at 9-117 (KVQE…RKYR) and 126-231 (KSSE…HAFR). 2 coiled-coil regions span residues 229–362 (AFRA…RLGL) and 406–430 (SFEEQAKKLASKLESENILIEKYLN).

Belongs to the cortexillin family. In terms of assembly, homodimer; parallel.

It localises to the cytoplasm. The protein localises to the cytoskeleton. Its function is as follows. Actin-bundling protein. When linked to F-actin the actin filaments form preferentially anti-parallel bundles that associate into meshworks. Plays a major role in cytokinesis. Negatively regulates cortical localization of rapgap1. The protein is Cortexillin-2 (ctxB) of Dictyostelium discoideum (Social amoeba).